Consider the following 687-residue polypeptide: MASPDAEDASPSPEYRSDLDDDMAAEQKTDDGSPSQKSSNGQKPASNAKDPLRPRRKKARRACFACQRAHLTCGDERPCTRCIKRGLQDHCMDGVRKKAKYLHDAPDGALMPGVGGHYPYMNGNRPTPLPSQDTHNVPMAPQGNMYTQAPSGTFYQPPSAQIPLPQAQHGRSFSDQQSPLSPPFSQAHHGPNVNPPSSISQGQPGQMQQFGPLFDPSDPALFNFDISSLNFGNHYGALEFGMLGHMSSAVDAPNDNTMMNAMNQTANMYGPQMAGAYGPNNPNAAMPFAQNSLPAGEWQESQSRQNSMHIHTPTSSATALDHGGHRHDSLNGPHAFAIGQGPSSHSTASPASTDASAFENDNPLSTATFFANTNRGQPQRSPTTNRHHQGNRPPSTALQPIHSNGVRKRHRDTKSIYQGIKKPFDYVKGYHRLFQICHKKFSKSLLAQAQQYLNLYRPVLLSVREEMDTDDLIHQEMGLQRNLMTLQDHFTEVGTPFLICRRSGEIVSCNKEFTILTGWRQDVLLGREPNLNVNLGNSREADESEMSTQTNTTPNLTGQEAETGTPAVNAIQLMDAKSALEYLQNFSELCWQDPHGHAKQRANMLRYQTKADFDRIQEMKANADHKSDAFVKMEGGAVHQGESAMQRLGAKNGMVDCMIWWHIKRDIFEMPVLVCMSVMPVLDKGLQ.

The segment at 1–56 (MASPDAEDASPSPEYRSDLDDDMAAEQKTDDGSPSQKSSNGQKPASNAKDPLRPRR) is disordered. Residues 32–45 (GSPSQKSSNGQKPA) show a composition bias toward polar residues. The zn(2)-C6 fungal-type DNA-binding region spans 63–91 (CFACQRAHLTCGDERPCTRCIKRGLQDHC). Composition is skewed to polar residues over residues 150–159 (PSGTFYQPPS) and 169–179 (HGRSFSDQQSP). 3 disordered regions span residues 150–214 (PSGT…GPLF), 300–411 (ESQS…KRHR), and 536–561 (GNSR…GQEA). Residues 195-212 (PPSSISQGQPGQMQQFGP) show a composition bias toward low complexity. Over residues 300–318 (ESQSRQNSMHIHTPTSSAT) the composition is skewed to polar residues. Over residues 342–357 (PSSHSTASPASTDASA) the composition is skewed to low complexity. Polar residues-rich tracts occupy residues 362-384 (NPLS…SPTT), 392-402 (RPPSTALQPIH), and 546-561 (MSTQ…GQEA). The region spanning 482 to 553 (NLMTLQDHFT…SEMSTQTNTT (72 aa)) is the PAS domain.

The protein belongs to the ERT1/acuK family.

Its subcellular location is the nucleus. In terms of biological role, transcription factor which regulates nonfermentable carbon utilization. Activator of gluconeogenetic genes. The polypeptide is Transcription activator of gluconeogenesis SNOG_12336 (Phaeosphaeria nodorum (strain SN15 / ATCC MYA-4574 / FGSC 10173) (Glume blotch fungus)).